We begin with the raw amino-acid sequence, 420 residues long: Pyridinium-3,5-bisthiocarboxylic acid mononucleotide nickel insertion protein (420 aa).

The protein belongs to the LarC family.

The enzyme catalyses Ni(II)-pyridinium-3,5-bisthiocarboxylate mononucleotide = pyridinium-3,5-bisthiocarboxylate mononucleotide + Ni(2+). In terms of biological role, involved in the biosynthesis of a nickel-pincer cofactor ((SCS)Ni(II) pincer complex). Binds Ni(2+), and functions in nickel delivery to pyridinium-3,5-bisthiocarboxylic acid mononucleotide (P2TMN), to form the mature cofactor. Is required for the activation of the lactate racemase LarA. May also be involved in the activation of other nickel-pincer cofactor-dependent enzymes. The polypeptide is Pyridinium-3,5-bisthiocarboxylic acid mononucleotide nickel insertion protein (Lactiplantibacillus plantarum (strain ATCC BAA-793 / NCIMB 8826 / WCFS1) (Lactobacillus plantarum)).